We begin with the raw amino-acid sequence, 178 residues long: Caveolin-1 (178 aa).

Ser-2 is subject to N-acetylserine. At Ser-2 the chain carries Phosphoserine. A required for homooligomerization region spans residues 2–94; the sequence is SGGKYVDSEG…WKASFTTFTV (93 aa). Over 2 to 104 the chain is Cytoplasmic; the sequence is SGGKYVDSEG…TKYWFYRLLS (103 aa). Residue Lys-5 is modified to N6-acetyllysine; alternate. Lys-5 participates in a covalent cross-link: Glycyl lysine isopeptide (Lys-Gly) (interchain with G-Cter in ubiquitin); alternate. Phosphotyrosine is present on Tyr-6. The residue at position 9 (Ser-9) is a Phosphoserine. Position 14 is a phosphotyrosine; by ABL1 (Tyr-14). Tyr-25 is subject to Phosphotyrosine. Glycyl lysine isopeptide (Lys-Gly) (interchain with G-Cter in ubiquitin) cross-links involve residues Lys-26, Lys-30, Lys-39, Lys-47, and Lys-57. The tract at residues 82–94 is interaction with CAVIN3; that stretch reads DGIWKASFTTFTV. An intramembrane region (helical) is located at residues 105–125; it reads ALFGIPMALIWGIYFAILSFL. At 126–178 the chain is on the cytoplasmic side; sequence HIWAVVPCIKSFLIEIQCISRVYSIYVHTFCDPLFEAIGKIFSNIRINTQKEI. An interacts with SPRY1, SPRY2, SPRY3 and SPRY4 region spans residues 131–142; sequence VPCIKSFLIEIQ. S-palmitoyl cysteine attachment occurs at residues Cys-133, Cys-143, and Cys-156. The interacts with SPRY1, SPRY2, and SPRY4 stretch occupies residues 149-160; it reads SIYVHTFCDPLF. The interacts with SPRY1, SPRY2, SPRY3 and SPRY4 stretch occupies residues 167–178; sequence FSNIRINTQKEI.

Belongs to the caveolin family. Homooligomer. Interacts with GLIPR2. Interacts with NOSTRIN. Interacts with SNAP25 and STX1A. Interacts (via the N-terminus) with DPP4; the interaction is direct. Interacts with CTNNB1, CDH1 and JUP. Interacts with PACSIN2; this interaction induces membrane tubulation. Interacts with SLC7A9. Interacts with BMX and BTK. Interacts with TGFBR1. Interacts with CAVIN3 (via leucine-zipper domain) in a cholesterol-sensitive manner. Interacts with CAVIN1. Interacts with EHD2 in a cholesterol-dependent manner. Forms a ternary complex with UBXN6 and VCP; mediates CAV1 targeting to lysosomes for degradation. Interacts with ABCG1; this interaction regulates ABCG1-mediated cholesterol efflux. Interacts with NEU3; this interaction enhances NEU3 sialidase activity within caveola. Interacts (via C-terminus) with SPRY1, SPRY2 (via C-terminus), SPRY3, and SPRY4. Interacts with IGFBP5; this interaction allows trafficking of IGFBP5 from the plasma membrane to the nucleus. Post-translationally, phosphorylated at Tyr-14 by ABL1 in response to oxidative stress. In terms of processing, ubiquitinated. Undergo monoubiquitination and multi- and/or polyubiquitination. Monoubiquitination of N-terminal lysines promotes integration in a ternary complex with UBXN6 and VCP which promotes oligomeric CAV1 targeting to lysosomes for degradation. Ubiquitinated by ZNRF1; leading to degradation and modulation of the TLR4-mediated immune response.

It localises to the golgi apparatus membrane. The protein resides in the cell membrane. It is found in the membrane. The protein localises to the caveola. Its subcellular location is the membrane raft. In terms of biological role, may act as a scaffolding protein within caveolar membranes. Forms a stable heterooligomeric complex with CAV2 that targets to lipid rafts and drives caveolae formation. Mediates the recruitment of CAVIN proteins (CAVIN1/2/3/4) to the caveolae. Interacts directly with G-protein alpha subunits and can functionally regulate their activity. Involved in the costimulatory signal essential for T-cell receptor (TCR)-mediated T-cell activation. Its binding to DPP4 induces T-cell proliferation and NF-kappa-B activation in a T-cell receptor/CD3-dependent manner. Recruits CTNNB1 to caveolar membranes and may regulate CTNNB1-mediated signaling through the Wnt pathway. Negatively regulates TGFB1-mediated activation of SMAD2/3 by mediating the internalization of TGFBR1 from membrane rafts leading to its subsequent degradation. Binds 20(S)-hydroxycholesterol (20(S)-OHC). The chain is Caveolin-1 (CAV1) from Bos taurus (Bovine).